We begin with the raw amino-acid sequence, 541 residues long: Methyl-accepting chemotaxis protein PcaY (541 aa).

At 1 to 10 (MLANLKIRTG) the chain is on the cytoplasmic side. The helical transmembrane segment at 11–31 (MFWVLSLFSLTLLFSTASAWW) threads the bilayer. At 32–189 (AAVGSDQQIT…ESDRRLARAQ (158 aa)) the chain is on the periplasmic side. The interval 35–187 (GSDQQITELD…MLESDRRLAR (153 aa)) is ligand-binding domain. The chain crosses the membrane as a helical span at residues 190 to 210 (LLSLCLLGMTVVLAVLCWAFI). Topologically, residues 211 to 541 (AQRVLHPLRE…MTALVGRFKV (331 aa)) are cytoplasmic. Residues 212–264 (QRVLHPLREAGGHFRRIASGDLSVPVQGQGNNEIGQLFHELQRMQQSQRDTLG) enclose the HAMP domain. In terms of domain architecture, Methyl-accepting transducer spans 269 to 505 (CARQLDAAAS…EVDRNLLNIR (237 aa)). Positions 322–341 (TSQTTSESNQLAAQSRRQVS) are disordered.

This sequence belongs to the methyl-accepting chemotaxis (MCP) protein family.

It is found in the cell inner membrane. In terms of biological role, chemotactic-signal transducers respond to changes in the concentration of attractants and repellents in the environment, transduce a signal from the outside to the inside of the cell, and facilitate sensory adaptation through the variation of the level of methylation. PcaY is responsible for the detection of multiple aromatic and hydroaromatic compounds that are metabolized through the beta-ketoadipate catabolic pathway, including vanillin, vanillate, 4-hydroxybenzoate (4-HBA), benzoate and protocatechuate. It also senses several nonmetabolizable aromatic compounds. The chain is Methyl-accepting chemotaxis protein PcaY from Pseudomonas putida (strain ATCC 700007 / DSM 6899 / JCM 31910 / BCRC 17059 / LMG 24140 / F1).